The primary structure comprises 321 residues: Phospho-N-acetylmuramoyl-pentapeptide-transferase (321 aa).

A run of 10 helical transmembrane segments spans residues 1 to 21 (MIFV…PVLI), 50 to 70 (MGGL…IIFV), 76 to 96 (IILL…DDYI), 112 to 132 (FLAQ…FHLV), 140 to 160 (IPFT…IVFL), 176 to 196 (GLAT…SFVL), 200 to 220 (AIGI…PYNI), 225 to 245 (VFMG…ISIM), 250 to 270 (LSLI…MLQV), and 300 to 320 (VVTV…WIGV).

The protein belongs to the glycosyltransferase 4 family. MraY subfamily. It depends on Mg(2+) as a cofactor.

The protein localises to the cell membrane. It catalyses the reaction UDP-N-acetyl-alpha-D-muramoyl-L-alanyl-gamma-D-glutamyl-L-lysyl-D-alanyl-D-alanine + di-trans,octa-cis-undecaprenyl phosphate = Mur2Ac(oyl-L-Ala-gamma-D-Glu-L-Lys-D-Ala-D-Ala)-di-trans,octa-cis-undecaprenyl diphosphate + UMP. It participates in cell wall biogenesis; peptidoglycan biosynthesis. Catalyzes the initial step of the lipid cycle reactions in the biosynthesis of the cell wall peptidoglycan: transfers peptidoglycan precursor phospho-MurNAc-pentapeptide from UDP-MurNAc-pentapeptide onto the lipid carrier undecaprenyl phosphate, yielding undecaprenyl-pyrophosphoryl-MurNAc-pentapeptide, known as lipid I. The sequence is that of Phospho-N-acetylmuramoyl-pentapeptide-transferase from Staphylococcus aureus (strain bovine RF122 / ET3-1).